The primary structure comprises 203 residues: ER membrane protein complex subunit 8/9 homolog (203 aa).

The region spanning 4 to 140 is the MPN domain; the sequence is YKVSERAYAK…IQVFNCPGDS (137 aa).

The protein belongs to the EMC8/EMC9 family. In terms of assembly, component of the ER membrane protein complex (EMC).

The protein localises to the endoplasmic reticulum membrane. Its function is as follows. Part of the endoplasmic reticulum membrane protein complex (EMC) that enables the energy-independent insertion into endoplasmic reticulum membranes of newly synthesized multi-pass membrane proteins like rhodopsins. This chain is ER membrane protein complex subunit 8/9 homolog, found in Drosophila melanogaster (Fruit fly).